Consider the following 168-residue polypeptide: Urease accessory protein UreE (168 aa).

Residues 137-168 (PESGAYHGTTGHGGGHSHSHGHSHDHHHDHSH) form a disordered region. Residues 151–161 (GHSHSHGHSHD) show a composition bias toward basic residues.

Belongs to the UreE family.

Its subcellular location is the cytoplasm. Involved in urease metallocenter assembly. Binds nickel. Probably functions as a nickel donor during metallocenter assembly. This is Urease accessory protein UreE from Saccharophagus degradans (strain 2-40 / ATCC 43961 / DSM 17024).